The sequence spans 351 residues: Heat-inducible transcription repressor HrcA (351 aa).

Belongs to the HrcA family.

Negative regulator of class I heat shock genes (grpE-dnaK-dnaJ and groELS operons). Prevents heat-shock induction of these operons. This is Heat-inducible transcription repressor HrcA from Fusobacterium nucleatum subsp. nucleatum (strain ATCC 25586 / DSM 15643 / BCRC 10681 / CIP 101130 / JCM 8532 / KCTC 2640 / LMG 13131 / VPI 4355).